A 594-amino-acid polypeptide reads, in one-letter code: DNA mismatch repair protein MutL (594 aa).

This sequence belongs to the DNA mismatch repair MutL/HexB family.

Functionally, this protein is involved in the repair of mismatches in DNA. It is required for dam-dependent methyl-directed DNA mismatch repair. May act as a 'molecular matchmaker', a protein that promotes the formation of a stable complex between two or more DNA-binding proteins in an ATP-dependent manner without itself being part of a final effector complex. This is DNA mismatch repair protein MutL from Rhizorhabdus wittichii (strain DSM 6014 / CCUG 31198 / JCM 15750 / NBRC 105917 / EY 4224 / RW1) (Sphingomonas wittichii).